The chain runs to 440 residues: Chromosome partition protein MukF (440 aa).

The tract at residues 208 to 236 (LSETSGTLRELQDTLDAAGDKLQANLLRI) is leucine-zipper.

It belongs to the MukF family. Interacts, and probably forms a ternary complex, with MukE and MukB via its C-terminal region. The complex formation is stimulated by calcium or magnesium. It is required for an interaction between MukE and MukB.

The protein localises to the cytoplasm. It localises to the nucleoid. In terms of biological role, involved in chromosome condensation, segregation and cell cycle progression. May participate in facilitating chromosome segregation by condensation DNA from both sides of a centrally located replisome during cell division. Not required for mini-F plasmid partitioning. Probably acts via its interaction with MukB and MukE. Overexpression results in anucleate cells. It has a calcium binding activity. The polypeptide is Chromosome partition protein MukF (Klebsiella pneumoniae (strain 342)).